The chain runs to 479 residues: Anaerobic nitric oxide reductase flavorubredoxin (479 aa).

Residues 30–210 form a zinc metallo-hydrolase region; the sequence is LRGSSYNSYL…PFSRLVTPKI (181 aa). Residues His79, Glu81, Asp83, His147, Asp166, and His227 each contribute to the Fe cation site. The Flavodoxin-like domain maps to 254-393; it reads ITIFYDTMSN…LCREHGREIA (140 aa). Residues 260–264 and 342–369 contribute to the FMN site; these read TMSNN and AFGSHGWSGGAMDRLSTRLQDAGFEMSL. The Rubredoxin-like domain maps to 423-474; sequence GPRMQCSVCQWIYDPAKGEPMQDVAPGTPWSEVPDNFLCPECSLGKDVFDEL. Fe cation contacts are provided by Cys428, Cys431, Cys461, and Cys464.

It in the N-terminal section; belongs to the zinc metallo-hydrolase group 3 family. Homotetramer. The cofactor is Fe cation. FMN is required as a cofactor.

The protein localises to the cytoplasm. It participates in nitrogen metabolism; nitric oxide reduction. Its function is as follows. Anaerobic nitric oxide reductase; uses NADH to detoxify nitric oxide (NO), protecting several 4Fe-4S NO-sensitive enzymes. Has at least 2 reductase partners, only one of which (NorW, flavorubredoxin reductase) has been identified. NO probably binds to the di-iron center; electrons enter from the NorW at rubredoxin and are transferred sequentially to the FMN center and the di-iron center. Also able to function as an aerobic oxygen reductase. The polypeptide is Anaerobic nitric oxide reductase flavorubredoxin (Shigella flexneri serotype 5b (strain 8401)).